The sequence spans 187 residues: Bis(5'-nucleosyl)-tetraphosphatase, symmetrical (187 aa).

The HD domain occupies 18-132; the sequence is RYQHTIGVME…IFLADYIEPN (115 aa). Position 21 (His-21) interacts with ADP. Positions 21, 50, and 51 each coordinate Fe cation. ADP contacts are provided by residues 51 to 54, His-83, 109 to 110, Asp-127, Arg-133, and 170 to 175; these read DYAK, HT, and PIYPDT. Asp-127 contacts Fe cation.

Belongs to the Ap4A hydrolase YqeK family. Homodimer.

It carries out the reaction P(1),P(4)-bis(5'-adenosyl) tetraphosphate + H2O = 2 ADP + 2 H(+). In terms of biological role, hydrolyzes diadenosine 5',5'''-P1,P4-tetraphosphate (Ap4A) to yield ADP. This Halalkalibacterium halodurans (strain ATCC BAA-125 / DSM 18197 / FERM 7344 / JCM 9153 / C-125) (Bacillus halodurans) protein is Bis(5'-nucleosyl)-tetraphosphatase, symmetrical.